Here is a 354-residue protein sequence, read N- to C-terminus: Aspartate carbamoyltransferase catalytic subunit (354 aa).

Residues Arg-67 and Thr-68 each coordinate carbamoyl phosphate. Lys-95 provides a ligand contact to L-aspartate. Carbamoyl phosphate contacts are provided by Arg-117, His-150, and Gln-153. L-aspartate is bound by residues Arg-190 and Arg-261. 2 residues coordinate carbamoyl phosphate: Gly-302 and Pro-303.

Belongs to the aspartate/ornithine carbamoyltransferase superfamily. ATCase family. As to quaternary structure, heterododecamer (2C3:3R2) of six catalytic PyrB chains organized as two trimers (C3), and six regulatory PyrI chains organized as three dimers (R2).

The enzyme catalyses carbamoyl phosphate + L-aspartate = N-carbamoyl-L-aspartate + phosphate + H(+). It functions in the pathway pyrimidine metabolism; UMP biosynthesis via de novo pathway; (S)-dihydroorotate from bicarbonate: step 2/3. Its function is as follows. Catalyzes the condensation of carbamoyl phosphate and aspartate to form carbamoyl aspartate and inorganic phosphate, the committed step in the de novo pyrimidine nucleotide biosynthesis pathway. The sequence is that of Aspartate carbamoyltransferase catalytic subunit from Synechococcus sp. (strain RCC307).